Consider the following 314-residue polypeptide: Homeobox protein DBX1-A (314 aa).

A DNA-binding region (homeobox) is located at residues 175–234; that stretch reads GMLRRAVFSDVQRKALEKMFQKQKYISKPDRKKLAAKLGLKDSQVKIWFQNRRMKWRNSK. 2 disordered regions span residues 234-279 and 292-314; these read KERE…CAPS and STDS…ITVS. The segment covering 258 to 267 has biased composition (basic and acidic residues); sequence DLSDVGKKSS. Over residues 305–314 the composition is skewed to acidic residues; it reads SESEDEITVS.

The protein belongs to the H2.0 homeobox family.

It localises to the nucleus. The polypeptide is Homeobox protein DBX1-A (dbx1a) (Danio rerio (Zebrafish)).